A 194-amino-acid polypeptide reads, in one-letter code: GTP cyclohydrolase 1 (194 aa).

Zn(2+) is bound by residues C83, H86, and C155.

Belongs to the GTP cyclohydrolase I family. Homomer.

The enzyme catalyses GTP + H2O = 7,8-dihydroneopterin 3'-triphosphate + formate + H(+). It participates in cofactor biosynthesis; 7,8-dihydroneopterin triphosphate biosynthesis; 7,8-dihydroneopterin triphosphate from GTP: step 1/1. This Streptococcus pyogenes serotype M49 (strain NZ131) protein is GTP cyclohydrolase 1.